A 41-amino-acid polypeptide reads, in one-letter code: Phospholipase A2 homolog nigroviriditoxin acidic subunit A (41 aa).

Belongs to the phospholipase A2 family. Group II subfamily. D49 sub-subfamily. As to quaternary structure, nigroviriditoxin is a heterodimer of an acidic subunit A and a basic subunit B. Expressed by the venom gland.

It localises to the secreted. In terms of biological role, heterodimer A-B: Nigroviriditoxin possesses phospholipase A2 (PLA2) activity. It consists of a non-covalent association of a basic PLA2 subunit B with a non-enzymatic subunit A. Its function is as follows. Subunit A: The acidic subunit of nigroviriditoxin probably is a heterotrimer of three disulfide-linked chains generated by post-translational maturation of a PLA2-like precursor. It appears to have no PLA2 activity of its own, instead inhibiting the catalytic activity of subunit B. It is not toxic to mice by itself but increases toxicity of subunit B. The sequence is that of Phospholipase A2 homolog nigroviriditoxin acidic subunit A from Bothriechis nigroviridis (Black-speckled palm pit viper).